The primary structure comprises 450 residues: UDP-N-acetylmuramoylalanine--D-glutamate ligase (450 aa).

119-125 (GSNGKTT) lines the ATP pocket.

Belongs to the MurCDEF family.

The protein resides in the cytoplasm. It catalyses the reaction UDP-N-acetyl-alpha-D-muramoyl-L-alanine + D-glutamate + ATP = UDP-N-acetyl-alpha-D-muramoyl-L-alanyl-D-glutamate + ADP + phosphate + H(+). It participates in cell wall biogenesis; peptidoglycan biosynthesis. In terms of biological role, cell wall formation. Catalyzes the addition of glutamate to the nucleotide precursor UDP-N-acetylmuramoyl-L-alanine (UMA). In Streptococcus pneumoniae serotype 19F (strain G54), this protein is UDP-N-acetylmuramoylalanine--D-glutamate ligase.